Consider the following 88-residue polypeptide: Small ribosomal subunit protein uS17 (88 aa).

Belongs to the universal ribosomal protein uS17 family. In terms of assembly, part of the 30S ribosomal subunit.

One of the primary rRNA binding proteins, it binds specifically to the 5'-end of 16S ribosomal RNA. This is Small ribosomal subunit protein uS17 from Stutzerimonas stutzeri (strain A1501) (Pseudomonas stutzeri).